Here is a 1140-residue protein sequence, read N- to C-terminus: DNA damage-binding protein 1 (1140 aa).

Residue Ser-2 is modified to N-acetylserine. The interval 2 to 768 is interaction with CDT1; the sequence is SYNYVVTAQK…QALSSSVSSS (767 aa). Positions 13 to 356 are WD repeat beta-propeller A; that stretch reads TAVNGCVTGH…VVAMETFTNL (344 aa). Residues 391 to 708 form a WD repeat beta-propeller B; Interaction with CUL4A region; it reads RNGIGIHEHA…LTIGTIDEIQ (318 aa). Residues 709-1043 are WD repeat beta-propeller C; that stretch reads KLHIRTVPLY…NGMIGLVTSL (335 aa). The tract at residues 771 to 1140 is interaction with CDT1 and CUL4A; sequence FSSSTAPHET…KVVEELTRIH (370 aa). At Lys-1067 the chain carries N6-acetyllysine. A Glycyl lysine isopeptide (Lys-Gly) (interchain with G-Cter in SUMO2) cross-link involves residue Lys-1121. Phosphothreonine is present on Thr-1125.

The protein belongs to the DDB1 family. In terms of assembly, component of the UV-DDB complex which includes DDB1 and DDB2; the heterodimer dimerizes to give rise to a heterotetramer when bound to damaged DNA. The UV-DDB complex interacts with monoubiquitinated histone H2A and binds to XPC via the DDB2 subunit. Component of numerous DCX (DDB1-CUL4-X-box) E3 ubiquitin-protein ligase complexes which consist of a core of DDB1, CUL4A or CUL4B and RBX1. DDB1 may recruit specific substrate targeting subunits to the DCX complex. These substrate targeting subunits are generally known as DCAF (DDB1- and CUL4-associated factor) or CDW (CUL4-DDB1-associated WD40-repeat) proteins. Interacts with AMBRA1, ATG16L1, BTRC, CRBN, DCAF1, DCAF4, DCAF5, DCAF6, DCAF7, DCAF8, DCAF9, DCAF10, DCAF11, DCAF12, DCAF15, DCAF16, DCAF17, DDA1, DET1, DTL, ERCC8, FBXW5, FBXW8, GRWD1, KATNB1, NLE1, NUP43, PAFAH1B1, PHIP, PWP1, RBBP4, RBBP5, RBBP7, COP1, SNRNP40, DCAF1, WDR5, WDR5B, WDR12, WDR26, WDR39, WDR42, WDR53, WDR59, WDR61, WSB1, WSB2, LRWD1 and WDTC1. DCX complexes may associate with the COP9 signalosome, and this inhibits the E3 ubiquitin-protein ligase activity of the complex. Interacts with NF2, TSC1 and TSC2. Interacts with AGO1 and AGO2. Associates with the E3 ligase complex containing DYRK2, EDD/UBR5, DDB1 and DCAF1 proteins (EDVP complex). Interacts directly with DYRK2. DCX(DTL) complex interacts with FBXO11; does not ubiquitinate and degradate FBXO11. Interacts with TRPC4AP. Interacts with CRY1 and CRY2. The DDB1-CUL4A complex interacts with CRY1. May also interact with DCUN1D1, DCUN1D2, DCUN1D3 and DCUN1D5. Component of the DCX(DCAF13) E3 ubiquitin ligase complex, at least composed of CUL4 (CUL4A or CUL4B), DDB1, DCAF13 and RBX1. Interacts with DCAF13 (via WD40 domain). In terms of processing, phosphorylated by ABL1. Post-translationally, ubiquitinated by CUL4A. Subsequently degraded by ubiquitin-dependent proteolysis. Acetylated, promoting interaction with CUL4 (CUL4A or CUL4B) and subsequent formation of DCX (DDB1-CUL4-X-box) E3 ubiquitin-protein ligase complexes. Deacetylation by SIRT7 impairs the interaction with CUL4 (CUL4A or CUL4B) and formation of DCX (DDB1-CUL4-X-box) E3 ubiquitin-protein ligase complexes.

Its subcellular location is the cytoplasm. The protein localises to the nucleus. It functions in the pathway protein modification; protein ubiquitination. Its function is as follows. Protein, which is both involved in DNA repair and protein ubiquitination, as part of the UV-DDB complex and DCX (DDB1-CUL4-X-box) complexes, respectively. Core component of the UV-DDB complex (UV-damaged DNA-binding protein complex), a complex that recognizes UV-induced DNA damage and recruit proteins of the nucleotide excision repair pathway (the NER pathway) to initiate DNA repair. The UV-DDB complex preferentially binds to cyclobutane pyrimidine dimers (CPD), 6-4 photoproducts (6-4 PP), apurinic sites and short mismatches. Also functions as a component of numerous distinct DCX (DDB1-CUL4-X-box) E3 ubiquitin-protein ligase complexes which mediate the ubiquitination and subsequent proteasomal degradation of target proteins. The functional specificity of the DCX E3 ubiquitin-protein ligase complex is determined by the variable substrate recognition component recruited by DDB1. DCX(DDB2) (also known as DDB1-CUL4-ROC1, CUL4-DDB-ROC1 and CUL4-DDB-RBX1) may ubiquitinate histone H2A, histone H3 and histone H4 at sites of UV-induced DNA damage. The ubiquitination of histones may facilitate their removal from the nucleosome and promote subsequent DNA repair. DCX(DDB2) also ubiquitinates XPC, which may enhance DNA-binding by XPC and promote NER. DCX(DTL) plays a role in PCNA-dependent polyubiquitination of CDT1 and MDM2-dependent ubiquitination of TP53 in response to radiation-induced DNA damage and during DNA replication. DCX(ERCC8) (the CSA complex) plays a role in transcription-coupled repair (TCR). The DDB1-CUL4A-DTL E3 ligase complex regulates the circadian clock function by mediating the ubiquitination and degradation of CRY1. DDB1-mediated CRY1 degradation promotes FOXO1 protein stability and FOXO1-mediated gluconeogenesis in the liver. By acting on TET dioxygenses, essential for oocyte maintenance at the primordial follicle stage, hence essential for female fertility. Maternal factor required for proper zygotic genome activation and genome reprogramming. The sequence is that of DNA damage-binding protein 1 (DDB1) from Bos taurus (Bovine).